A 227-amino-acid chain; its full sequence is 2-C-methyl-D-erythritol 4-phosphate cytidylyltransferase (227 aa).

Belongs to the IspD/TarI cytidylyltransferase family. IspD subfamily.

The enzyme catalyses 2-C-methyl-D-erythritol 4-phosphate + CTP + H(+) = 4-CDP-2-C-methyl-D-erythritol + diphosphate. The protein operates within isoprenoid biosynthesis; isopentenyl diphosphate biosynthesis via DXP pathway; isopentenyl diphosphate from 1-deoxy-D-xylulose 5-phosphate: step 2/6. Functionally, catalyzes the formation of 4-diphosphocytidyl-2-C-methyl-D-erythritol from CTP and 2-C-methyl-D-erythritol 4-phosphate (MEP). The chain is 2-C-methyl-D-erythritol 4-phosphate cytidylyltransferase from Lachnospira eligens (strain ATCC 27750 / DSM 3376 / VPI C15-48 / C15-B4) (Eubacterium eligens).